Here is a 599-residue protein sequence, read N- to C-terminus: Elongation factor 4 (599 aa).

One can recognise a tr-type G domain in the interval 2–184; that stretch reads KNIRNFSIIA…RLVRDIPPPE (183 aa). Residues 14-19 and 131-134 contribute to the GTP site; these read DHGKST and NKID.

It belongs to the TRAFAC class translation factor GTPase superfamily. Classic translation factor GTPase family. LepA subfamily.

The protein localises to the cell inner membrane. The enzyme catalyses GTP + H2O = GDP + phosphate + H(+). Functionally, required for accurate and efficient protein synthesis under certain stress conditions. May act as a fidelity factor of the translation reaction, by catalyzing a one-codon backward translocation of tRNAs on improperly translocated ribosomes. Back-translocation proceeds from a post-translocation (POST) complex to a pre-translocation (PRE) complex, thus giving elongation factor G a second chance to translocate the tRNAs correctly. Binds to ribosomes in a GTP-dependent manner. This chain is Elongation factor 4, found in Klebsiella pneumoniae (strain 342).